Consider the following 206-residue polypeptide: HTH-type transcriptional regulator Hpr (206 aa).

Residues 13-157 (ALLFSQRMAQ…MMSIIRHIYG (145 aa)) enclose the HTH marR-type domain. The segment at residues 63–86 (ISEIAKFGVMHVSTAFNFSKKLEE) is a DNA-binding region (H-T-H motif). A disordered region spans residues 177-206 (SEEGKMKKKQEAKEAGESIEVDKPLEPLKN). The segment covering 178–206 (EEGKMKKKQEAKEAGESIEVDKPLEPLKN) has biased composition (basic and acidic residues).

As to quaternary structure, homodimer.

Its function is as follows. Negative regulator of protease production and sporulation. The chain is HTH-type transcriptional regulator Hpr from Bacillus licheniformis (strain ATCC 14580 / DSM 13 / JCM 2505 / CCUG 7422 / NBRC 12200 / NCIMB 9375 / NCTC 10341 / NRRL NRS-1264 / Gibson 46).